The chain runs to 93 residues: Phosphoribosyl-ATP pyrophosphatase (93 aa).

It belongs to the PRA-PH family.

Its subcellular location is the cytoplasm. It catalyses the reaction 1-(5-phospho-beta-D-ribosyl)-ATP + H2O = 1-(5-phospho-beta-D-ribosyl)-5'-AMP + diphosphate + H(+). It participates in amino-acid biosynthesis; L-histidine biosynthesis; L-histidine from 5-phospho-alpha-D-ribose 1-diphosphate: step 2/9. The chain is Phosphoribosyl-ATP pyrophosphatase from Mycolicibacterium paratuberculosis (strain ATCC BAA-968 / K-10) (Mycobacterium paratuberculosis).